A 203-amino-acid chain; its full sequence is Ribosomal RNA large subunit methyltransferase E (203 aa).

5 residues coordinate S-adenosyl-L-methionine: Gly-60, Trp-62, Asp-79, Asp-95, and Asp-119. The active-site Proton acceptor is the Lys-159.

This sequence belongs to the class I-like SAM-binding methyltransferase superfamily. RNA methyltransferase RlmE family.

The protein localises to the cytoplasm. The enzyme catalyses uridine(2552) in 23S rRNA + S-adenosyl-L-methionine = 2'-O-methyluridine(2552) in 23S rRNA + S-adenosyl-L-homocysteine + H(+). Its function is as follows. Specifically methylates the uridine in position 2552 of 23S rRNA at the 2'-O position of the ribose in the fully assembled 50S ribosomal subunit. This is Ribosomal RNA large subunit methyltransferase E from Pelagibacter ubique (strain HTCC1062).